A 111-amino-acid polypeptide reads, in one-letter code: Pyrimidine/purine nucleoside phosphorylase 1 (111 aa).

It belongs to the nucleoside phosphorylase PpnP family.

The catalysed reaction is a purine D-ribonucleoside + phosphate = a purine nucleobase + alpha-D-ribose 1-phosphate. The enzyme catalyses adenosine + phosphate = alpha-D-ribose 1-phosphate + adenine. It carries out the reaction cytidine + phosphate = cytosine + alpha-D-ribose 1-phosphate. It catalyses the reaction guanosine + phosphate = alpha-D-ribose 1-phosphate + guanine. The catalysed reaction is inosine + phosphate = alpha-D-ribose 1-phosphate + hypoxanthine. The enzyme catalyses thymidine + phosphate = 2-deoxy-alpha-D-ribose 1-phosphate + thymine. It carries out the reaction uridine + phosphate = alpha-D-ribose 1-phosphate + uracil. It catalyses the reaction xanthosine + phosphate = alpha-D-ribose 1-phosphate + xanthine. Functionally, catalyzes the phosphorolysis of diverse nucleosides, yielding D-ribose 1-phosphate and the respective free bases. Can use uridine, adenosine, guanosine, cytidine, thymidine, inosine and xanthosine as substrates. Also catalyzes the reverse reactions. The chain is Pyrimidine/purine nucleoside phosphorylase 1 from Psychrobacter cryohalolentis (strain ATCC BAA-1226 / DSM 17306 / VKM B-2378 / K5).